Consider the following 154-residue polypeptide: Low molecular weight protein-tyrosine-phosphatase PtpA (154 aa).

C8 serves as the catalytic Nucleophile. Residue R14 is part of the active site. D120 serves as the catalytic Proton donor.

Belongs to the low molecular weight phosphotyrosine protein phosphatase family.

The catalysed reaction is O-phospho-L-tyrosyl-[protein] + H2O = L-tyrosyl-[protein] + phosphate. Dephosphorylates the phosphotyrosine-containing proteins. This Staphylococcus saprophyticus subsp. saprophyticus (strain ATCC 15305 / DSM 20229 / NCIMB 8711 / NCTC 7292 / S-41) protein is Low molecular weight protein-tyrosine-phosphatase PtpA (ptpA).